Reading from the N-terminus, the 80-residue chain is Metallothionein-like protein type 2 MET1 (80 aa).

The protein belongs to the metallothionein superfamily. Type 15 family.

Its function is as follows. Metallothioneins have a high content of cysteine residues that bind various heavy metals. This is Metallothionein-like protein type 2 MET1 (MET1) from Fragaria ananassa (Strawberry).